The following is a 210-amino-acid chain: Dephospho-CoA kinase (210 aa).

In terms of domain architecture, DPCK spans 4–201 (IVALTGGICS…NFYIYLSKQN (198 aa)). 12–17 (CSGKTT) contacts ATP.

Belongs to the CoaE family.

The protein resides in the cytoplasm. The enzyme catalyses 3'-dephospho-CoA + ATP = ADP + CoA + H(+). The protein operates within cofactor biosynthesis; coenzyme A biosynthesis; CoA from (R)-pantothenate: step 5/5. Catalyzes the phosphorylation of the 3'-hydroxyl group of dephosphocoenzyme A to form coenzyme A. The polypeptide is Dephospho-CoA kinase (Buchnera aphidicola subsp. Schizaphis graminum (strain Sg)).